A 703-amino-acid chain; its full sequence is MEQSANARQSTLRSRTQELNTLSVLSKDVSLEDAKKYWKDRQADGKVDWIFEKVLNKLKILWQKIKDGSATNLEYVRAVILVNEAGNLEEDLEEDLKEDTDTIHIDIHKENEVQENTDCSPERKEDTCLNLNTDCGTDVSGSEPECNSTVSPPAAERVYFGNHSCGPSCLSGINSFLFTKGNPLQLPISCDFQRCHLKINSPDDLSHILYKAPCGRSLRDYDEVHSYLTETGCHFLAVDNFSFNNHVRLDSNSSFNQGIVQDCDISNDVESVPVAFSNEIDNTRPSNFIYRKTSWPPGYSLNNFTDIFVKCCNCTDGCLDILTCSCLQLTAQAFTKCMESSLGIGPLGYKHKRLQEPIPTGLYECNVSCKCDRMLCQNRVVQHGLKLRLQVFKTNTKGWGVRCLDDVDKGTFVCIYAGRILIRTADCTVKSTPDDSVACGNEDHEDSTSTCALILSKRKRKTSHSDSEVTVMHTNPYSMRSHGLSVHRLSNTFSPRQARSGEREFSLQPLRRPKTKTSMLQKRRRQLIEEGACTVQNSSEEEGPTPPQSPEQKSSAGTKIQRNENSDETASGYVSEESSSSVISGGHPLEKPISKFKSKLNKTTVYLSTSPEQTCEENLHFLDASKEGNVGRFLNHSCCPNLFVQQVFVDTHQKCFPWVAFFTNSVVKAGTELTWDYSYDIGTAADQEIQCLCGQKTCKNKVV.

One can recognise an MBD domain in the interval 178-248; that stretch reads FTKGNPLQLP…DNFSFNNHVR (71 aa). The 75-residue stretch at 310–384 folds into the Pre-SET domain; sequence KCCNCTDGCL…LCQNRVVQHG (75 aa). Zn(2+) contacts are provided by cysteine 312, cysteine 314, cysteine 318, cysteine 324, cysteine 326, cysteine 365, cysteine 369, cysteine 371, and cysteine 376. The SET domain occupies 387 to 678; sequence LRLQVFKTNT…AGTELTWDYS (292 aa). 397 to 399 serves as a coordination point for S-adenosyl-L-methionine; that stretch reads KGW. The segment at 492–588 is disordered; the sequence is TFSPRQARSG…SSSVISGGHP (97 aa). A compositionally biased stretch (basic residues) spans 511-525; it reads RRPKTKTSMLQKRRR. Residues 550 to 560 are compositionally biased toward polar residues; sequence PEQKSSAGTKI. Low complexity predominate over residues 571–586; that stretch reads SGYVSEESSSSVISGG. S-adenosyl-L-methionine-binding positions include arginine 632 and 635–636; that span reads NH. Zn(2+) is bound by residues cysteine 638, cysteine 691, cysteine 693, and cysteine 698.

It belongs to the class V-like SAM-binding methyltransferase superfamily.

The protein resides in the nucleus. Its subcellular location is the chromosome. The enzyme catalyses N(6),N(6)-dimethyl-L-lysyl(9)-[histone H3] + S-adenosyl-L-methionine = N(6),N(6),N(6)-trimethyl-L-lysyl(9)-[histone H3] + S-adenosyl-L-homocysteine + H(+). Histone methyltransferase involved in left-right axis specification in early development and mitosis. Specifically trimethylates 'Lys-9' of histone H3 (H3K9me3). H3K9me3 is a specific tag for epigenetic transcriptional repression that recruits HP1 (CBX1, CBX3 and/or CBX5) proteins to methylated histones. Contributes to H3K9me3 in both the interspersed repetitive elements and centromere-associated repeats. Plays a role in chromosome condensation and segregation during mitosis. This is Histone-lysine N-methyltransferase SETDB2 (setdb2) from Xenopus laevis (African clawed frog).